The primary structure comprises 439 residues: (p)ppApp synthetase toxin Tas1 (439 aa).

The protein resides in the secreted. It carries out the reaction AMP + ATP = adenosine 3'-diphosphate,5'-phosphate + AMP + H(+). The catalysed reaction is ADP + ATP = adenosine 3'-diphosphate,5'-diphosphate + AMP. It catalyses the reaction 2 ATP = adenosine 3'-diphosphate,5'-triphosphate + AMP. Functionally, type VI secretion exported toxin that pyrophosphorylates adenosine nucleotides to produce (p)ppApp. Thereby, depletes cellular ADP and ATP to dysregulate central metabolism in competitor cells. This chain is (p)ppApp synthetase toxin Tas1 (tas1), found in Pseudomonas aeruginosa (strain UCBPP-PA14).